The chain runs to 536 residues: Lysosomal acid glucosylceramidase (536 aa).

The first 39 residues, 1-39 (MELSSPSREECPRPQGRVGIMAASLMGLLLLQAASWASG), serve as a signal peptide directing secretion. Disulfide bonds link cysteine 43-cysteine 55 and cysteine 57-cysteine 62. N-linked (GlcNAc...) asparagine glycans are attached at residues asparagine 58, asparagine 98, and asparagine 185. The active-site Proton donor is the glutamate 274. An N-linked (GlcNAc...) asparagine glycan is attached at asparagine 309. Catalysis depends on glutamate 379, which acts as the Nucleophile. A glycan (N-linked (GlcNAc...) asparagine) is linked at asparagine 501.

It belongs to the glycosyl hydrolase 30 family. Interacts with saposin-C. Interacts with SCARB2. Interacts with TCP1. Interacts with GRN; this interaction prevents aggregation of GBA1-SCARB2 complex via interaction with HSPA1A upon stress.

Its subcellular location is the lysosome membrane. It catalyses the reaction a beta-D-glucosyl-(1&lt;-&gt;1')-N-acylsphing-4-enine + H2O = an N-acylsphing-4-enine + D-glucose. The catalysed reaction is a beta-D-galactosyl-(1&lt;-&gt;1')-N-acylsphing-4-enine + H2O = an N-acylsphing-4-enine + D-galactose. The enzyme catalyses cholesteryl 3-beta-D-glucoside + H2O = cholesterol + D-glucose. It carries out the reaction a beta-D-glucosyl-(1&lt;-&gt;1')-N-acylsphing-4-enine + cholesterol = cholesteryl 3-beta-D-glucoside + an N-acylsphing-4-enine. It catalyses the reaction beta-D-glucosyl-N-(9Z-octadecenoyl)-sphing-4E-enine + cholesterol = N-(9Z-octadecenoyl)-sphing-4-enine + cholesteryl 3-beta-D-glucoside. The catalysed reaction is beta-D-glucosyl-N-octanoylsphing-4E-enine + cholesterol = N-octanoylsphing-4-enine + cholesteryl 3-beta-D-glucoside. The enzyme catalyses beta-D-glucosyl-N-dodecanoylsphing-4-enine + cholesterol = N-dodecanoylsphing-4-enine + cholesteryl 3-beta-D-glucoside. It carries out the reaction beta-D-glucosyl-(1&lt;-&gt;1)-N-octadecanoylsphing-4-enine + cholesterol = N-octadecanoylsphing-4-enine + cholesteryl 3-beta-D-glucoside. It catalyses the reaction beta-D-glucosyl-(1&lt;-&gt;1')-N-(15Z-tetracosenoyl)-sphing-4-enine + cholesterol = N-(15Z-tetracosenoyl)-sphing-4-enine + cholesteryl 3-beta-D-glucoside. The catalysed reaction is a beta-D-galactosyl-(1&lt;-&gt;1')-N-acylsphing-4-enine + cholesterol = cholesteryl 3-beta-D-galactoside + an N-acylsphing-4-enine. The enzyme catalyses 1-(beta-D-galactosyl)-N-dodecanoylsphing-4-enine + cholesterol = cholesteryl 3-beta-D-galactoside + N-dodecanoylsphing-4-enine. It carries out the reaction a beta-D-xylosyl-(1&lt;-&gt;1')-N-acylsphing-4-enine + cholesterol = cholesteryl 3-beta-D-xyloside + an N-acylsphing-4-enine. It catalyses the reaction beta-D-xylosyl-(1&lt;-&gt;1')-N-(9Z-octadecenoyl)-sphing-4-enine + cholesterol = cholesteryl 3-beta-D-xyloside + N-(9Z-octadecenoyl)-sphing-4-enine. It functions in the pathway steroid metabolism; cholesterol metabolism. The protein operates within sphingolipid metabolism. Glucosylceramidase that catalyzes, within the lysosomal compartment, the hydrolysis of glucosylceramides/GlcCers (such as beta-D-glucosyl-(1&lt;-&gt;1')-N-acylsphing-4-enine) into free ceramides (such as N-acylsphing-4-enine) and glucose. Plays a central role in the degradation of complex lipids and the turnover of cellular membranes. Through the production of ceramides, participates in the PKC-activated salvage pathway of ceramide formation. Catalyzes the glucosylation of cholesterol, through a transglucosylation reaction where glucose is transferred from GlcCer to cholesterol. GlcCer containing mono-unsaturated fatty acids (such as beta-D-glucosyl-N-(9Z-octadecenoyl)-sphing-4-enine) are preferred as glucose donors for cholesterol glucosylation when compared with GlcCer containing same chain length of saturated fatty acids (such as beta-D-glucosyl-N-octadecanoyl-sphing-4-enine). Under specific conditions, may alternatively catalyze the reverse reaction, transferring glucose from cholesteryl 3-beta-D-glucoside to ceramide. Can also hydrolyze cholesteryl 3-beta-D-glucoside producing glucose and cholesterol. Catalyzes the hydrolysis of galactosylceramides/GalCers (such as beta-D-galactosyl-(1&lt;-&gt;1')-N-acylsphing-4-enine), as well as the transfer of galactose between GalCers and cholesterol in vitro, but with lower activity than with GlcCers. Contrary to GlcCer and GalCer, xylosylceramide/XylCer (such as beta-D-xyosyl-(1&lt;-&gt;1')-N-acylsphing-4-enine) is not a good substrate for hydrolysis, however it is a good xylose donor for transxylosylation activity to form cholesteryl 3-beta-D-xyloside. The sequence is that of Lysosomal acid glucosylceramidase (GBA1) from Sus scrofa (Pig).